An 85-amino-acid chain; its full sequence is RNA-binding protein KhpA (85 aa).

The KH domain occupies 32-85 (YLEYNLTVNPEDIGRVIGRQGRVASAIRTIVYSVRVSGPKRVRLTIEDGQQKNS).

Belongs to the KhpA RNA-binding protein family. In terms of assembly, forms a complex with KhpB.

It is found in the cytoplasm. Its function is as follows. A probable RNA chaperone. Forms a complex with KhpB which binds to cellular RNA and controls its expression. Plays a role in peptidoglycan (PG) homeostasis and cell length regulation. Functionally, necessary for correct cell elongation. This is RNA-binding protein KhpA from Lactiplantibacillus plantarum (strain ATCC BAA-793 / NCIMB 8826 / WCFS1) (Lactobacillus plantarum).